The chain runs to 419 residues: Adenylosuccinate synthetase (419 aa).

Residues glycine 11–lysine 17 and glycine 39–serine 41 each bind GTP. The active-site Proton acceptor is the aspartate 12. Mg(2+) is bound by residues aspartate 12 and glycine 39. IMP-binding positions include aspartate 12–lysine 15, asparagine 37–histidine 40, threonine 129, arginine 143, asparagine 221, threonine 236, and arginine 296. Histidine 40 serves as the catalytic Proton donor. Valine 292–arginine 298 contributes to the substrate binding site. GTP-binding positions include arginine 298, lysine 324–aspartate 326, and glycine 408–glycine 410.

It belongs to the adenylosuccinate synthetase family. As to quaternary structure, homodimer. Mg(2+) is required as a cofactor.

Its subcellular location is the cytoplasm. It catalyses the reaction IMP + L-aspartate + GTP = N(6)-(1,2-dicarboxyethyl)-AMP + GDP + phosphate + 2 H(+). It functions in the pathway purine metabolism; AMP biosynthesis via de novo pathway; AMP from IMP: step 1/2. In terms of biological role, plays an important role in the de novo pathway and in the salvage pathway of purine nucleotide biosynthesis. Catalyzes the first committed step in the biosynthesis of AMP from IMP. The polypeptide is Adenylosuccinate synthetase (Chaetomium globosum (strain ATCC 6205 / CBS 148.51 / DSM 1962 / NBRC 6347 / NRRL 1970) (Soil fungus)).